A 268-amino-acid chain; its full sequence is Hydroxyethylthiazole kinase (268 aa).

Substrate is bound at residue Met45. ATP-binding residues include Arg121 and Thr167. Gly194 serves as a coordination point for substrate.

This sequence belongs to the Thz kinase family. Mg(2+) is required as a cofactor.

The catalysed reaction is 5-(2-hydroxyethyl)-4-methylthiazole + ATP = 4-methyl-5-(2-phosphooxyethyl)-thiazole + ADP + H(+). It participates in cofactor biosynthesis; thiamine diphosphate biosynthesis; 4-methyl-5-(2-phosphoethyl)-thiazole from 5-(2-hydroxyethyl)-4-methylthiazole: step 1/1. Catalyzes the phosphorylation of the hydroxyl group of 4-methyl-5-beta-hydroxyethylthiazole (THZ). In Bacillus thuringiensis (strain Al Hakam), this protein is Hydroxyethylthiazole kinase.